The following is a 434-amino-acid chain: Trigger factor (434 aa).

In terms of domain architecture, PPIase FKBP-type spans 161–246; the sequence is GDRVVIDFAG…VKGVEAPILP (86 aa).

The protein belongs to the FKBP-type PPIase family. Tig subfamily.

Its subcellular location is the cytoplasm. The catalysed reaction is [protein]-peptidylproline (omega=180) = [protein]-peptidylproline (omega=0). Its function is as follows. Involved in protein export. Acts as a chaperone by maintaining the newly synthesized protein in an open conformation. Functions as a peptidyl-prolyl cis-trans isomerase. This chain is Trigger factor, found in Aromatoleum aromaticum (strain DSM 19018 / LMG 30748 / EbN1) (Azoarcus sp. (strain EbN1)).